We begin with the raw amino-acid sequence, 354 residues long: Thymidylate synthase (354 aa).

Positions 1-32 (MPAAGSEPSRPPSPPGVQEQSAEPRPPPPPHG) are disordered. Arginine 53 contributes to the dUMP binding site. Residue serine 117 is modified to Phosphoserine. Residue 178-179 (RR) participates in dUMP binding. The active-site Nucleophile is the cysteine 198. Residues 218–221 (RSGD), asparagine 229, and 259–261 (HIY) each bind dUMP. Aspartate 221 lines the (6R)-5,10-methylene-5,6,7,8-tetrahydrofolate pocket. Lysine 349 participates in a covalent cross-link: Glycyl lysine isopeptide (Lys-Gly) (interchain with G-Cter in SUMO2). Alanine 353 contributes to the (6R)-5,10-methylene-5,6,7,8-tetrahydrofolate binding site.

It belongs to the thymidylate synthase family. In terms of assembly, homodimer.

It is found in the nucleus. Its subcellular location is the cytoplasm. It localises to the mitochondrion. The protein resides in the mitochondrion matrix. The protein localises to the mitochondrion inner membrane. It carries out the reaction dUMP + (6R)-5,10-methylene-5,6,7,8-tetrahydrofolate = 7,8-dihydrofolate + dTMP. Its pathway is pyrimidine metabolism; dTTP biosynthesis. Its function is as follows. Catalyzes the reductive methylation of 2'-deoxyuridine 5'-monophosphate (dUMP) to thymidine 5'-monophosphate (dTMP), using the cosubstrate, 5,10- methylenetetrahydrofolate (CH2H4folate) as a 1-carbon donor and reductant and contributes to the de novo mitochondrial thymidylate biosynthesis pathway. This chain is Thymidylate synthase (TYMS), found in Bos taurus (Bovine).